The sequence spans 164 residues: Peptide deformylase (164 aa).

Residues Cys-87 and His-129 each coordinate Fe cation. The active site involves Glu-130. Fe cation is bound at residue His-133.

The protein belongs to the polypeptide deformylase family. The cofactor is Fe(2+).

The catalysed reaction is N-terminal N-formyl-L-methionyl-[peptide] + H2O = N-terminal L-methionyl-[peptide] + formate. Removes the formyl group from the N-terminal Met of newly synthesized proteins. Requires at least a dipeptide for an efficient rate of reaction. N-terminal L-methionine is a prerequisite for activity but the enzyme has broad specificity at other positions. The polypeptide is Peptide deformylase (Thermotoga sp. (strain RQ2)).